The sequence spans 649 residues: Acetyl-coenzyme A synthetase (649 aa).

CoA-binding positions include 190 to 193 and Thr-310; that span reads RGGR. Residues 386–388, 410–415, Asp-499, and Arg-514 contribute to the ATP site; these read GEP and DTWWQT. A CoA-binding site is contributed by Ser-522. Arg-525 is a binding site for ATP. 3 residues coordinate Mg(2+): Val-536, His-538, and Val-541. A CoA-binding site is contributed by Arg-583. Lys-608 carries the post-translational modification N6-acetyllysine.

It belongs to the ATP-dependent AMP-binding enzyme family. It depends on Mg(2+) as a cofactor. In terms of processing, acetylated. Deacetylation by the SIR2-homolog deacetylase activates the enzyme.

The catalysed reaction is acetate + ATP + CoA = acetyl-CoA + AMP + diphosphate. In terms of biological role, catalyzes the conversion of acetate into acetyl-CoA (AcCoA), an essential intermediate at the junction of anabolic and catabolic pathways. AcsA undergoes a two-step reaction. In the first half reaction, AcsA combines acetate with ATP to form acetyl-adenylate (AcAMP) intermediate. In the second half reaction, it can then transfer the acetyl group from AcAMP to the sulfhydryl group of CoA, forming the product AcCoA. The chain is Acetyl-coenzyme A synthetase from Methylorubrum extorquens (strain PA1) (Methylobacterium extorquens).